A 181-amino-acid chain; its full sequence is ADP-ribosylation factor 1 (181 aa).

G2 carries the N-myristoyl glycine lipid modification. Residues 3-16 (NMFANLFKGLFGKK) form an important for the stable binding to the membranes region. Residues 24-32 (GLDAAGKTT), 126-129 (NKQD), and A160 each bind GTP.

This sequence belongs to the small GTPase superfamily. Arf family.

Its subcellular location is the golgi apparatus membrane. It carries out the reaction GTP + H2O = GDP + phosphate + H(+). Alternates between an inactive GDP-bound form and an active GTP-bound form. Activated by a guanine nucleotide-exchange factor (GEF) and inactivated by GTPase-activating protein (GAP). In terms of biological role, small GTPase involved in protein trafficking between different compartments. Modulates vesicle budding and uncoating within the Golgi complex. In its GTP-bound form, triggers the recruitment of coatomer proteins to the Golgi membrane. The hydrolysis of ARF1-bound GTP, which is mediated by ARFGAPs proteins, is required for dissociation of coat proteins from Golgi membranes and vesicles. This is ADP-ribosylation factor 1 (arf1) from Xenopus laevis (African clawed frog).